The chain runs to 490 residues: 5-hydroxytryptamine receptor 3A (490 aa).

Positions Met-1–Ala-19 are cleaved as a signal peptide. Topologically, residues Gln-20–Leu-249 are extracellular. Asn-33, Asn-109, Asn-175, and Asn-191 each carry an N-linked (GlcNAc...) asparagine glycan. The cysteines at positions 162 and 176 are disulfide-linked. The chain crosses the membrane as a helical span at residues Phe-250 to Phe-270. Topologically, residues Tyr-271–Thr-285 are cytoplasmic. A helical membrane pass occupies residues Leu-286–Ile-306. Residues Gly-307–Ser-312 lie on the Extracellular side of the membrane. Residues Val-313–Val-333 traverse the membrane as a helical segment. The Cytoplasmic portion of the chain corresponds to Arg-334–Arg-467. The segment at Gly-401–Glu-422 is disordered. An HA-stretch; determines single-channel conductance in 5-HT3 receptors region spans residues Ala-426 to Asp-462. Residues Val-468–His-488 traverse the membrane as a helical segment. At Tyr-489–Ala-490 the chain is on the extracellular side.

It belongs to the ligand-gated ion channel (TC 1.A.9) family. 5-hydroxytryptamine receptor (TC 1.A.9.2) subfamily. HTR3A sub-subfamily. In terms of assembly, forms homopentameric as well as heteropentameric serotonin-activated cation-selective channel complexes with HTR3B or HTR3C or HTR3D or HTR3E. The homomeric complex is functional but exhibits low conductance with modified voltage dependence, and decreased agonist and antagonist affinity. Heteropentameric complexes display properties which resemble that of neuronal serotonin-activated channels in vivo. Interacts with RIC3. As to expression, expressed in cortex, intestine and liver. Not expressed in muscle or spleen.

The protein localises to the postsynaptic cell membrane. The protein resides in the cell membrane. The enzyme catalyses Na(+)(in) = Na(+)(out). It catalyses the reaction K(+)(in) = K(+)(out). The catalysed reaction is Ca(2+)(in) = Ca(2+)(out). It carries out the reaction Mg(2+)(in) = Mg(2+)(out). Its function is as follows. Forms serotonin (5-hydroxytryptamine/5-HT3)-activated cation-selective channel complexes, which when activated cause fast, depolarizing responses in neurons. The protein is 5-hydroxytryptamine receptor 3A of Cavia porcellus (Guinea pig).